The sequence spans 489 residues: Anthranilate synthase component 1 1 (489 aa).

262–264 contributes to the L-tryptophan binding site; sequence PYS. The tract at residues 288 to 309 is disordered; sequence DRIETEPIAGTRPRGETPDADD. Chorismate is bound at residue 297 to 298; sequence GT. The segment covering 300–309 has biased composition (basic and acidic residues); the sequence is PRGETPDADD. Glu324 provides a ligand contact to Mg(2+). Residues Tyr412, Arg432, 446–448, and Gly448 contribute to the chorismate site; that span reads GAG. Mg(2+) is bound at residue Glu461.

Belongs to the anthranilate synthase component I family. As to quaternary structure, tetramer of two components I and two components II. Mg(2+) is required as a cofactor.

The enzyme catalyses chorismate + L-glutamine = anthranilate + pyruvate + L-glutamate + H(+). It functions in the pathway amino-acid biosynthesis; L-tryptophan biosynthesis; L-tryptophan from chorismate: step 1/5. The chain is Anthranilate synthase component 1 1 (trpE1) from Haloarcula marismortui (strain ATCC 43049 / DSM 3752 / JCM 8966 / VKM B-1809) (Halobacterium marismortui).